We begin with the raw amino-acid sequence, 221 residues long: MAGKPVLHYFDGRGRMEPIRWLLAAAGVEFEEKFLKTRDDLARLRSDGSLMFQQVPMVEIDGMKLVQTKAILNYIASKYNLYGKDMKERAIIDMYTEGVADLEIMILYYPHMPPEEKEASLAKIKEQTRNRYFPAFEKVLKSHGQDYLVGNRLSRADIALVELLYHVEELDPGVVDNFPLLKALRSRVSNLPTVKKFLQPGSQRKPFDDAKCVESAKKIFS.

Ala2 is modified (N-acetylalanine). Residues 3-83 (GKPVLHYFDG…YIASKYNLYG (81 aa)) form the GST N-terminal domain. An N6-succinyllysine modification is found at Lys4. Residues Tyr9, Arg45, 54 to 55 (QV), and 67 to 68 (QT) contribute to the glutathione site. One can recognise a GST C-terminal domain in the interval 85 to 207 (DMKERAIIDM…LQPGSQRKPF (123 aa)).

Homodimer.

It is found in the cytoplasm. The catalysed reaction is RX + glutathione = an S-substituted glutathione + a halide anion + H(+). It catalyses the reaction androst-5-ene-3,17-dione = androst-4-ene-3,17-dione. The enzyme catalyses pregn-5-ene-3,20-dione = progesterone. Functionally, conjugation of reduced glutathione to a wide number of exogenous and endogenous hydrophobic electrophiles. Catalyzes isomerization reactions that contribute to the biosynthesis of steroid hormones. Efficiently catalyze obligatory double-bond isomerizations of delta(5)-androstene-3,17-dione and delta(5)-pregnene-3,20-dione, precursors to testosterone and progesterone, respectively. Has a high catalytic activity for aflatoxin B1-8,9 epoxide. This is Glutathione S-transferase A3 from Mus musculus (Mouse).